Reading from the N-terminus, the 458-residue chain is Protein adenylyltransferase FICD (458 aa).

Residues 1-23 lie on the Cytoplasmic side of the membrane; that stretch reads MMLIPMASVMAVTEPKWVSVWSR. A helical; Signal-anchor for type II membrane protein membrane pass occupies residues 24 to 44; sequence FLWVTLLSMVLGSLLALLLPL. Residues 45–458 are Lumenal-facing; that stretch reads GAVEEQCLAV…GFKETLPVKP (414 aa). Position 79 is an O-AMP-serine; by autocatalysis (S79). At T80 the chain carries O-AMP-threonine; by autocatalysis. 2 TPR repeats span residues 106 to 139 and 140 to 173; these read ARAA…DPDF and VDAL…SPYH. T183 is modified (O-AMP-threonine; by autocatalysis). The Inhibitory (S/T)XXXE(G/N) motif signature appears at 230-235; that stretch reads TVAIEG. E234 contacts ATP. N-linked (GlcNAc...) asparagine glycosylation occurs at N275. Residues 285–420 form the Fido domain; sequence VTISDVLEIH…VRPFIRFIAK (136 aa). ATP is bound at residue 316–319; that stretch reads VGHH. H363 is a catalytic residue. ATP contacts are provided by residues 367 to 374, 399 to 400, and N407; these read DGNGRTSR and YY. N-linked (GlcNAc...) asparagine glycosylation is present at N446.

The protein belongs to the fic family. In terms of assembly, homodimer. Interacts with HD. Mg(2+) is required as a cofactor. The cofactor is Mn(2+). In terms of processing, auto-AMPylated in vitro; it is unclear whether auto-AMPylation is relevant in vivo. Post-translationally, N-glycosylated; predominantly glycosylated at Asn-275. As to expression, ubiquitous.

Its subcellular location is the endoplasmic reticulum membrane. It catalyses the reaction L-tyrosyl-[protein] + ATP = O-(5'-adenylyl)-L-tyrosyl-[protein] + diphosphate. It carries out the reaction 3-O-(5'-adenylyl)-L-threonyl-[protein] + H2O = L-threonyl-[protein] + AMP + H(+). The enzyme catalyses L-threonyl-[protein] + ATP = 3-O-(5'-adenylyl)-L-threonyl-[protein] + diphosphate. With respect to regulation, the side chain of Glu-234 determines which of the two opposing activities (AMPylase or de-AMPylase) will take place. In response to endoplasmic reticulum stress, mediates de-AMPylase activity. Adenylyltransferase activity is inhibited by the inhibitory helix present at the N-terminus: Glu-234 binds ATP and competes with ATP-binding at Arg-374, thereby preventing adenylyltransferase activity. In unstressed cells, disengagement of Glu-234 promotes adenylyltransferase activity. Activation dissociates ATP-binding from Glu-234, allowing ordered binding of the entire ATP moiety with the alpha-phosphate in an orientation that is productive for accepting an incoming target hydroxyl side chain. Functionally, protein that can both mediate the addition of adenosine 5'-monophosphate (AMP) to specific residues of target proteins (AMPylation), and the removal of the same modification from target proteins (de-AMPylation), depending on the context. The side chain of Glu-231 determines which of the two opposing activities (AMPylase or de-AMPylase) will take place. Acts as a key regulator of the ERN1/IRE1-mediated unfolded protein response (UPR) by mediating AMPylation or de-AMPylation of HSPA5/BiP. In unstressed cells, acts as an adenylyltransferase by mediating AMPylation of HSPA5/BiP at 'Thr-518', thereby inactivating it. In response to endoplasmic reticulum stress, acts as a phosphodiesterase by mediating removal of ATP (de-AMPylation) from HSPA5/BiP at 'Thr-518', leading to restore HSPA5/BiP activity. Although it is able to AMPylate RhoA, Rac and Cdc42 Rho GTPases in vitro, Rho GTPases do not constitute physiological substrates. This is Protein adenylyltransferase FICD from Homo sapiens (Human).